Reading from the N-terminus, the 334-residue chain is N-acetylmuramoyl-L-alanine amidase sle1 (334 aa).

The first 25 residues, 1–25 (MQKKVIAAIIGTSAISAVAATQANA), serve as a signal peptide directing secretion. Positions 27–70 (TTHTVKPGESVWAISNKYGISIAKLKSLNNLTSNLIFPNQVLKV) constitute a LysM 1 domain. Positions 71–86 (SGSSNSTSNSSRPSTN) are enriched in low complexity. The disordered stretch occupies residues 71 to 90 (SGSSNSTSNSSRPSTNSGGG). A LysM 2 domain is found at 91–134 (SYYTVQAGDSLSLIASKYGTTYQNIMRLNGLNNFFIYPGQKLKV). The tract at residues 137–156 (TASSSNSTSNSSRPSTNSSG) is disordered. A LysM 3 domain is found at 158 to 201 (SYYTVQAGDSLSLIASKYGTTYQNIMRLNGLNNFFIYPGQKLKV). Residues 210 to 334 (GSTTTTNRGY…YQVNNYRYIH (125 aa)) form the Peptidase C51 domain.

It is found in the secreted. It localises to the cell surface. It catalyses the reaction Hydrolyzes the link between N-acetylmuramoyl residues and L-amino acid residues in certain cell-wall glycopeptides.. Peptidoglycan hydrolase involved in the splitting of the septum during cell division. This chain is N-acetylmuramoyl-L-alanine amidase sle1 (sle1), found in Staphylococcus aureus (strain MRSA252).